The sequence spans 345 residues: Nuclear distribution protein nudE-like 1 (345 aa).

A coiled-coil region spans residues 28–190; sequence QSFQEARDEL…LAVRERQQEV (163 aa). Positions 56 to 166 are self-association; it reads VQAEQRNRDL…LDEKESLLVS (111 aa). Positions 64–189 are interaction with KATNB1; it reads DLQADNQRLK…ELAVRERQQE (126 aa). The segment at 114-133 is required for interaction with PAFAH1B1; it reads YVRELEQANDDLERAKRATI. An interaction with CENPF region spans residues 175-345; sequence RDLRQELAVR…SAPGMLPLSV (171 aa). Positions 189 to 256 are interaction with YWHAE; sequence EVTRKSAPSS…SARISALNIV (68 aa). The interaction with NEFL stretch occupies residues 191-345; it reads TRKSAPSSPT…SAPGMLPLSV (155 aa). Positions 195–256 are interaction with KATNA1; that stretch reads APSSPTLDCE…SARISALNIV (62 aa). Ser-215 is subject to Phosphoserine. The residue at position 219 (Thr-219) is a Phosphothreonine; by CDK1 and MAPK1. At Ser-231 the chain carries Phosphoserine. The interval 241-280 is interaction with DISC1; that stretch reads TSPLTPSARISALNIVGDLLRKVGALESKLAACRNFAKDQ. Ser-242 carries the phosphoserine; by CDK1 modification. Thr-245 is subject to Phosphothreonine; by CDK1 and MAPK1. The segment at 256–291 is required for localization to the centrosome and interaction with dynein, dynactin, tubulin gamma, PCM1 and PCNT; sequence VGDLLRKVGALESKLAACRNFAKDQASRKSYISGNV. A lipid anchor (S-palmitoyl cysteine; by ZDHHC2, ZDHHC3 and ZDHHC7) is attached at Cys-273. Residues 315–345 are disordered; it reads GAVNGFDPAPPPPGLGSSRPSSAPGMLPLSV. Positions 329-339 are enriched in low complexity; that stretch reads LGSSRPSSAPG. Ser-344 is modified (phosphoserine).

The protein belongs to the nudE family. Self-associates. Interacts with DISC1, dynein, dynactin, tubulin gamma, KATNA1, KATNB1, microtubules, PAFAH1B1, PCM1, PCNT, and YWHAE. Interacts directly with NEFL and indirectly with NEFH. Interacts (via C-terminus) with CENPF. Interacts with ZNF365. Interacts with PLEKHM1 (via N- and C-terminus). Interacts with GTP-bound RAB9A; the interaction may lead to RAB9A-dynein motor tethering. In terms of processing, phosphorylated in mitosis. Can be phosphorylated by CDK1, CDK5 and MAPK1. Phosphorylation by CDK5 promotes interaction with KATNA1 and YWHAE. Palmitoylation at Cys-273 reduces affinity for dynein.

The protein resides in the cytoplasm. Its subcellular location is the cytoskeleton. The protein localises to the microtubule organizing center. It is found in the centrosome. It localises to the chromosome. The protein resides in the centromere. Its subcellular location is the kinetochore. The protein localises to the spindle. Functionally, required for organization of the cellular microtubule array and microtubule anchoring at the centrosome. May regulate microtubule organization at least in part by targeting the microtubule severing protein KATNA1 to the centrosome. Also positively regulates the activity of the minus-end directed microtubule motor protein dynein. May enhance dynein-mediated microtubule sliding by targeting dynein to the microtubule plus ends. Required for several dynein- and microtubule-dependent processes such as the maintenance of Golgi integrity, the centripetal motion of secretory vesicles and the coupling of the nucleus and centrosome. Also required during brain development for the migration of newly formed neurons from the ventricular/subventricular zone toward the cortical plate. Plays a role, together with DISC1, in the regulation of neurite outgrowth. Required for mitosis in some cell types but appears to be dispensible for mitosis in cortical neuronal progenitors, which instead requires NDE1. Facilitates the polymerization of neurofilaments from the individual subunits NEFH and NEFL. Positively regulates lysosome peripheral distribution and ruffled border formation in osteoclasts. Plays a role, together with DISC1, in the regulation of neurite outgrowth. May act as a RAB9A/B effector that tethers RAB9-associated late endosomes to the dynein motor for their retrograde transport to the trans-Golgi network. In Pongo abelii (Sumatran orangutan), this protein is Nuclear distribution protein nudE-like 1 (NDEL1).